Here is a 950-residue protein sequence, read N- to C-terminus: Leucine--tRNA ligase (950 aa).

Positions 42 to 52 (PYLNGNLHAGH) match the 'HIGH' region motif. The 'KMSKS' region signature appears at 629–633 (KMSKS). Lys632 provides a ligand contact to ATP. The tract at residues 928 to 950 (NPPYDPKGRAQNAEPGRPAIYIE) is disordered.

The protein belongs to the class-I aminoacyl-tRNA synthetase family.

It is found in the cytoplasm. The catalysed reaction is tRNA(Leu) + L-leucine + ATP = L-leucyl-tRNA(Leu) + AMP + diphosphate. The sequence is that of Leucine--tRNA ligase from Methanothrix thermoacetophila (strain DSM 6194 / JCM 14653 / NBRC 101360 / PT) (Methanosaeta thermophila).